The sequence spans 1551 residues: Transient receptor potential cation channel subfamily M member-like 2 (1551 aa).

Over 1 to 714 the chain is Cytoplasmic; the sequence is MGKDSFTPLY…WMGTMAMNTR (714 aa). Residues 715–730 lie within the membrane without spanning it; the sequence is WWKVLVCLYLPVLIFP. The Cytoplasmic portion of the chain corresponds to 731-837; that stretch reads IIYFVPDEQH…DRIMHFYSAP (107 aa). Positions 744–767 are disordered; sequence AAEREHQKSLNQKSSKVKSHKEKN. The helical transmembrane segment at 838–858 threads the bilayer; sequence FSKFVGNVVGYLAFIFLYAYV. The Extracellular portion of the chain corresponds to 859-877; it reads VLFNFPRFDPAKTLGGIHP. A helical transmembrane segment spans residues 878–898; the sequence is TEIVLYFWVFTILIEEIRQLA. Residues E893 and Q896 each coordinate Ca(2+). Over 899–916 the chain is Cytoplasmic; sequence AKPPKYIKDKVSVYFSDT. The chain crosses the membrane as a helical span at residues 917–937; that stretch reads WNFVDIFSLTVFIIAIILRFF. Ca(2+) contacts are provided by N918 and D921. Topologically, residues 938 to 947 are extracellular; it reads TNSRIFTASR. The chain crosses the membrane as a helical span at residues 948 to 968; that stretch reads IILSLDIIFFIVRSLQIFSVN. Residues 969–980 lie on the Cytoplasmic side of the membrane; sequence RLLGPKLVMIQK. The helical transmembrane segment at 981 to 1001 threads the bilayer; it reads MMQDLAQFIIILAVFTIAYGI. Residues 1002–1018 are Extracellular-facing; the sequence is ALHAVMFPSPGIYARNN. Residue N1017 is glycosylated (N-linked (GlcNAc...) asparagine). The pore-forming intramembrane region spans 1019–1034; the sequence is TWVTITSVVQYPYWQM. The Selectivity filter motif lies at 1035 to 1037; the sequence is YGE. Topologically, residues 1035–1059 are extracellular; that stretch reads YGELFLDEIQGEKPKEFGEVDPDGR. Positions 1040 to 1042 match the Prevents fast channel inactivation motif; sequence LDE. Residues 1060-1080 traverse the membrane as a helical segment; it reads WLSPLLLAIYMVFTNILLLNL. Residues 1081–1116 are Cytoplasmic-facing; the sequence is LIAIFNYTFERVQEDSDKVWKFQRYDLVQEYHSRPV. An intramembrane segment occupies 1117–1135; it reads FAPPLVLLGHILIFIRWVW. Residues 1136-1551 lie on the Cytoplasmic side of the membrane; the sequence is RMCRCGHPPR…KVAKMRDAAF (416 aa). Positions 1184 to 1209 form a coiled coil; it reads LEERVRALGDRVDCINSQLNRVLDSM. A Nudix hydrolase domain is found at 1394 to 1546; it reads WKRTSAGVML…VSILEKVAKM (153 aa). The Nudix box signature appears at 1428–1449; that stretch reads GMVEPGQLVTQALKAEFGEEAM.

It belongs to the transient receptor (TC 1.A.4) family. LTrpC subfamily. TRPM2 sub-subfamily. In terms of assembly, homotetramer.

It localises to the cell membrane. With respect to regulation, activated by phosphatidylinositol 4,5-bisphosphate (PIP2). Although PIP2 is essential for the channel activation, its contribution to the level of channel activity is minimal. Also activated by diphosphate ribose-2'-phosphate. Upon binding to ADPR, channel activation requires only a short initial cytosolic Ca(2+) increase, then the activation is sustained by the uptake of extracellular Ca(2+). Activated by 2-aminoethyl diphenylborinate (2-APB) in a Ca(2+)-dependent manner. 2-APB prevents the inactivation of the channel. Nonselective, voltage-independent cation channel that mediates Ca(2+) and to a lesser extent Na(+) influx, leading to increased cytoplasmic Ca(2+) levels. Functions as a ligand-gated ion channel. Binding of ADP-ribose causes a conformation change; the channel is primed but still requires Ca(2+) binding to trigger channel opening. May have ADP-ribose pyrophosphatase activity which reduces ADP-ribose levels induced by oxidative stress, thus preventing the channel activation by reactive oxygen species. This Nematostella vectensis (Starlet sea anemone) protein is Transient receptor potential cation channel subfamily M member-like 2.